A 291-amino-acid polypeptide reads, in one-letter code: ATP synthase gamma chain (291 aa).

It belongs to the ATPase gamma chain family. F-type ATPases have 2 components, CF(1) - the catalytic core - and CF(0) - the membrane proton channel. CF(1) has five subunits: alpha(3), beta(3), gamma(1), delta(1), epsilon(1). CF(0) has three main subunits: a, b and c.

It localises to the cell membrane. Produces ATP from ADP in the presence of a proton gradient across the membrane. The gamma chain is believed to be important in regulating ATPase activity and the flow of protons through the CF(0) complex. The sequence is that of ATP synthase gamma chain from Streptococcus equi subsp. equi (strain 4047).